A 319-amino-acid chain; its full sequence is Ribonuclease Z (319 aa).

His-62, His-64, Asp-66, His-67, His-145, Asp-215, and His-273 together coordinate Zn(2+). Asp-66 acts as the Proton acceptor in catalysis.

It belongs to the RNase Z family. Homodimer. Zn(2+) serves as cofactor.

The catalysed reaction is Endonucleolytic cleavage of RNA, removing extra 3' nucleotides from tRNA precursor, generating 3' termini of tRNAs. A 3'-hydroxy group is left at the tRNA terminus and a 5'-phosphoryl group is left at the trailer molecule.. Functionally, zinc phosphodiesterase, which displays some tRNA 3'-processing endonuclease activity. Probably involved in tRNA maturation, by removing a 3'-trailer from precursor tRNA. This is Ribonuclease Z from Borrelia hermsii (strain HS1 / DAH).